A 428-amino-acid chain; its full sequence is Enolase (428 aa).

Residue Gln-163 participates in (2R)-2-phosphoglycerate binding. Glu-205 acts as the Proton donor in catalysis. Mg(2+) is bound by residues Asp-242, Glu-285, and Asp-312. (2R)-2-phosphoglycerate is bound by residues Lys-337, Arg-366, Ser-367, and Lys-388. The active-site Proton acceptor is the Lys-337.

The protein belongs to the enolase family. Mg(2+) is required as a cofactor.

It localises to the cytoplasm. Its subcellular location is the secreted. The protein localises to the cell surface. The enzyme catalyses (2R)-2-phosphoglycerate = phosphoenolpyruvate + H2O. Its pathway is carbohydrate degradation; glycolysis; pyruvate from D-glyceraldehyde 3-phosphate: step 4/5. Functionally, catalyzes the reversible conversion of 2-phosphoglycerate (2-PG) into phosphoenolpyruvate (PEP). It is essential for the degradation of carbohydrates via glycolysis. This chain is Enolase, found in Nitrosomonas eutropha (strain DSM 101675 / C91 / Nm57).